The chain runs to 105 residues: Flagellar transcriptional regulator FlhD (105 aa).

The protein belongs to the FlhD family. In terms of assembly, homodimer; disulfide-linked. Forms a heterohexamer composed of two FlhC and four FlhD subunits. Each FlhC binds a FlhD dimer, forming a heterotrimer, and a hexamer assembles by dimerization of two heterotrimers.

It is found in the cytoplasm. Its function is as follows. Functions in complex with FlhC as a master transcriptional regulator that regulates transcription of several flagellar and non-flagellar operons by binding to their promoter region. Activates expression of class 2 flagellar genes, including fliA, which is a flagellum-specific sigma factor that turns on the class 3 genes. Also regulates genes whose products function in a variety of physiological pathways. This is Flagellar transcriptional regulator FlhD from Ralstonia nicotianae (strain ATCC BAA-1114 / GMI1000) (Ralstonia solanacearum).